The sequence spans 1005 residues: Ephrin type-A receptor 5 (1005 aa).

Positions 1-24 are disordered; that stretch reads MRGSGPRGAGRRRTQGRGGGGDTP. Residues 1–26 form the signal peptide; that stretch reads MRGSGPRGAGRRRTQGRGGGGDTPRV. Over 27-575 the chain is Extracellular; the sequence is PASLAGCYSA…GASNDQSQIP (549 aa). In terms of domain architecture, Eph LBD spans 62-240; the sequence is EVNLLDSRTV…YYKKCPSVVR (179 aa). N-linked (GlcNAc...) asparagine glycans are attached at residues Asn266, Asn301, Asn371, Asn425, Asn438, and Asn463. Fibronectin type-III domains lie at 359–469 and 470–564; these read PPSA…TNQA and APSP…TTPV. A helical transmembrane segment spans residues 576 to 596; that stretch reads IIGVSVTVGVILLAVMIGFLL. Residues 597-1005 lie on the Cytoplasmic side of the membrane; it reads SGSCCECGCG…MDAVAQVTLE (409 aa). Residues Tyr652 and Tyr658 each carry the phosphotyrosine; by autocatalysis modification. A Protein kinase domain is found at 677-938; that stretch reads ITIERVIGAG…DIVNMLDKLI (262 aa). Residues 683-691 and Lys709 contribute to the ATP site; that span reads IGAGEFGEV. Catalysis depends on Asp802, which acts as the Proton acceptor. A phosphotyrosine; by autocatalysis mark is found at Tyr835 and Tyr984. Residues 967 to 1005 form the SAM domain; it reads GAYRSVGEWLEATKMGRYTEIFMENGYSSMDAVAQVTLE.

It belongs to the protein kinase superfamily. Tyr protein kinase family. Ephrin receptor subfamily. In terms of assembly, heterotetramer upon binding of the ligand. The heterotetramer is composed of an ephrin dimer and a receptor dimer. Oligomerization is probably required to induce biological responses. Interacts (via SAM domain) with SAMD5 (via SAM domain). In terms of processing, phosphorylated. Phosphorylation is stimulated by the ligand EFNA5. Dephosphorylation upon stimulation by glucose, inhibits EPHA5 forward signaling and results in insulin secretion. As to expression, almost exclusively expressed in the nervous system. Predominantly expressed in neurons.

It is found in the cell membrane. It localises to the cell projection. The protein resides in the axon. The protein localises to the dendrite. It catalyses the reaction L-tyrosyl-[protein] + ATP = O-phospho-L-tyrosyl-[protein] + ADP + H(+). In terms of biological role, receptor tyrosine kinase which binds promiscuously GPI-anchored ephrin-A family ligands residing on adjacent cells, leading to contact-dependent bidirectional signaling into neighboring cells. The signaling pathway downstream of the receptor is referred to as forward signaling while the signaling pathway downstream of the ephrin ligand is referred to as reverse signaling. Among GPI-anchored ephrin-A ligands, EFNA5 most probably constitutes the cognate/functional ligand for EPHA5. Functions as an axon guidance molecule during development and may be involved in the development of the retinotectal, entorhino-hippocampal and hippocamposeptal pathways. Together with EFNA5 plays also a role in synaptic plasticity in adult brain through regulation of synaptogenesis. In addition to its function in the nervous system, the interaction of EPHA5 with EFNA5 mediates communication between pancreatic islet cells to regulate glucose-stimulated insulin secretion. The protein is Ephrin type-A receptor 5 (Epha5) of Rattus norvegicus (Rat).